We begin with the raw amino-acid sequence, 138 residues long: Putative pre-16S rRNA nuclease (138 aa).

Belongs to the YqgF nuclease family.

It is found in the cytoplasm. Its function is as follows. Could be a nuclease involved in processing of the 5'-end of pre-16S rRNA. The polypeptide is Putative pre-16S rRNA nuclease (Listeria monocytogenes serotype 4b (strain CLIP80459)).